Consider the following 423-residue polypeptide: Serine--tRNA ligase (423 aa).

Composition is skewed to basic and acidic residues over residues 1–24 and 62–71; these read MIDLKQLRDDPDRVRESQRTRGED and KMRDASPEEK. A disordered region spans residues 1–71; it reads MIDLKQLRDD…KMRDASPEEK (71 aa). An L-serine-binding site is contributed by 230-232; that stretch reads TSE. ATP contacts are provided by residues 261–263 and valine 277; that span reads RRE. L-serine is bound at residue glutamate 284. ATP is bound at residue 348 to 351; that stretch reads ELTS. Position 383 (threonine 383) interacts with L-serine.

This sequence belongs to the class-II aminoacyl-tRNA synthetase family. Type-1 seryl-tRNA synthetase subfamily. As to quaternary structure, homodimer. The tRNA molecule binds across the dimer.

It is found in the cytoplasm. The catalysed reaction is tRNA(Ser) + L-serine + ATP = L-seryl-tRNA(Ser) + AMP + diphosphate + H(+). The enzyme catalyses tRNA(Sec) + L-serine + ATP = L-seryl-tRNA(Sec) + AMP + diphosphate + H(+). Its pathway is aminoacyl-tRNA biosynthesis; selenocysteinyl-tRNA(Sec) biosynthesis; L-seryl-tRNA(Sec) from L-serine and tRNA(Sec): step 1/1. Catalyzes the attachment of serine to tRNA(Ser). Is also able to aminoacylate tRNA(Sec) with serine, to form the misacylated tRNA L-seryl-tRNA(Sec), which will be further converted into selenocysteinyl-tRNA(Sec). The sequence is that of Serine--tRNA ligase from Corynebacterium kroppenstedtii (strain DSM 44385 / JCM 11950 / CIP 105744 / CCUG 35717).